The primary structure comprises 293 residues: Acetylglutamate kinase (293 aa).

Substrate is bound by residues 70 to 71, R92, and N186; that span reads GG.

Belongs to the acetylglutamate kinase family. ArgB subfamily.

The protein resides in the cytoplasm. It carries out the reaction N-acetyl-L-glutamate + ATP = N-acetyl-L-glutamyl 5-phosphate + ADP. The protein operates within amino-acid biosynthesis; L-arginine biosynthesis; N(2)-acetyl-L-ornithine from L-glutamate: step 2/4. Functionally, catalyzes the ATP-dependent phosphorylation of N-acetyl-L-glutamate. This chain is Acetylglutamate kinase, found in Synechococcus sp. (strain CC9605).